We begin with the raw amino-acid sequence, 502 residues long: Lysine--tRNA ligase (502 aa).

Glutamate 413 and glutamate 420 together coordinate Mg(2+).

The protein belongs to the class-II aminoacyl-tRNA synthetase family. In terms of assembly, homodimer. Requires Mg(2+) as cofactor.

Its subcellular location is the cytoplasm. It carries out the reaction tRNA(Lys) + L-lysine + ATP = L-lysyl-tRNA(Lys) + AMP + diphosphate. The polypeptide is Lysine--tRNA ligase (Haemophilus influenzae (strain PittGG)).